We begin with the raw amino-acid sequence, 647 residues long: MARAGPRLVLSEEAVRAKSGLGPHRDLAELQSLSIPGTYQEKITHLGHSLMSLTGLKSLDLSRNSLVSLEGIQYLTALESLNLYYNCISSLAEVFRLHALTELVDVDFRLNPVVKVEPDYRLFVVHLLPKLQQLDDRPVRASERKASRLHFASEDSLDSKESVPASLKEGRPHHPRAKCTEALAKQSLVMDADDEAVLNLIAECEWDLGRPPGSTSFSQKGREADSRGSQESRHLLSPQLVQYQCGDSGKQGRETRRSSCRGCCLEKMPWSQLCGELPPLYGAEPEASRAPRPHTYFTPHPDSMDTEDSASSQKLDLSGEMVPGPLPAPGKCRKRRMPVGRFQTFSDQEGLGCPERTHGSSVPKESLSRQDSSESRNGRTLSQPEASETEEQRSRGVTDTREPSPGSHSALPGKKTALQAALLETLLDLVDRSWGGCRSLHSNEAFLAQARHILSSVEEFTAAQDSSAMVGEDVGSLALESKSLQSRLAEQQQQHAREMSEVTAELHHTHKELDDLRQHLDKSLEENSRLKSLLLSMKKEVKSADTAATLNLQIAGLQTSVKRLCGEIVELKQHLEHYDKIQELTQMLQESHSSLVSTNEHLLQELSQVRAQHRAEVEQMHWSYQELKKTMALFPHSSASHGGCQAC.

LRR repeat units follow at residues 29 to 50 (ELQS…GHSL), 55 to 76 (GLKS…QYLT), and 77 to 98 (ALES…FRLH). Residues 111–150 (NPVVKVEPDYRLFVVHLLPKLQQLDDRPVRASERKASRLH) enclose the LRRCT domain. Basic and acidic residues-rich tracts occupy residues 152-161 (ASEDSLDSKE) and 220-234 (KGRE…ESRH). Disordered stretches follow at residues 152 to 176 (ASED…HHPR), 211 to 256 (PPGS…RETR), and 285 to 413 (PEAS…ALPG). S237 is subject to Phosphoserine. Basic and acidic residues predominate over residues 366–377 (SLSRQDSSESRN). Residue S382 is modified to Phosphoserine. Positions 390 to 402 (EEQRSRGVTDTRE) are enriched in basic and acidic residues. The residue at position 404 (S404) is a Phosphoserine. A coiled-coil region spans residues 476–620 (SLALESKSLQ…AQHRAEVEQM (145 aa)).

This sequence belongs to the CEP72 family. Interacts with KIZ, PCM1 and CDK5RAP2.

It localises to the cytoplasm. The protein resides in the cytoskeleton. It is found in the microtubule organizing center. Its subcellular location is the centrosome. The protein localises to the centriolar satellite. In terms of biological role, involved in the recruitment of key centrosomal proteins to the centrosome. Provides centrosomal microtubule-nucleation activity on the gamma-tubulin ring complexes (gamma-TuRCs) and has critical roles in forming a focused bipolar spindle, which is needed for proper tension generation between sister chromatids. Required for localization of KIZ, AKAP9 and gamma-tubulin ring complexes (gamma-TuRCs). Involved in centriole duplication. Required for CDK5RAP22, CEP152, WDR62 and CEP63 centrosomal localization and promotes the centrosomal localization of CDK2. The sequence is that of Centrosomal protein of 72 kDa (CEP72) from Homo sapiens (Human).